The following is a 321-amino-acid chain: Lipoyl synthase (321 aa).

Positions 60, 65, 71, 86, 90, 93, and 299 each coordinate [4Fe-4S] cluster. The region spanning 72–288 is the Radical SAM core domain; sequence WEKKHATFMI…ETIGRTKGFL (217 aa).

It belongs to the radical SAM superfamily. Lipoyl synthase family. Requires [4Fe-4S] cluster as cofactor.

The protein resides in the cytoplasm. The catalysed reaction is [[Fe-S] cluster scaffold protein carrying a second [4Fe-4S](2+) cluster] + N(6)-octanoyl-L-lysyl-[protein] + 2 oxidized [2Fe-2S]-[ferredoxin] + 2 S-adenosyl-L-methionine + 4 H(+) = [[Fe-S] cluster scaffold protein] + N(6)-[(R)-dihydrolipoyl]-L-lysyl-[protein] + 4 Fe(3+) + 2 hydrogen sulfide + 2 5'-deoxyadenosine + 2 L-methionine + 2 reduced [2Fe-2S]-[ferredoxin]. Its pathway is protein modification; protein lipoylation via endogenous pathway; protein N(6)-(lipoyl)lysine from octanoyl-[acyl-carrier-protein]: step 2/2. In terms of biological role, catalyzes the radical-mediated insertion of two sulfur atoms into the C-6 and C-8 positions of the octanoyl moiety bound to the lipoyl domains of lipoate-dependent enzymes, thereby converting the octanoylated domains into lipoylated derivatives. The chain is Lipoyl synthase from Mesorhizobium japonicum (strain LMG 29417 / CECT 9101 / MAFF 303099) (Mesorhizobium loti (strain MAFF 303099)).